The primary structure comprises 462 residues: MAPLLQLLWLLTLLSTVALSPVPAKPWADDEQAWNLSSQELLAPARFALDMYNYGRAAGTRAVLGAVRGRVRRAGQGSLFSLEATLEEPPCNDPLVCPLPETKKTVLCSFEVLEELKEHLLLRRDCSPVNAKVTEFRNATFSSFLPLLDKDPLPQDFSVKMAPLFKDFMTTYNRTYESREEAQWRLTVFARNMIRAQKIQALDRGTAQYGITKFSDLTEEEFHTIYLNPLLQKESGRKMSPAKSINDLAPPEWDWRKKGAVTEVKNQGMCGSCWAFSVTGNVEGQWFLNRGTLLSLSEQELLDCDKVDKACLGGLPSNAYAAIKNLGGLETEDDYGYQGHVQTCNFSAQMAKVYINDSVELSRNENKIAAWLAQKGPISVAINAFGMQFYRHGIAHPFRPLCSPWFIDHAVLLVGYGNRSNIPYWAIKNSWGSDWGEEGYYYLYRGSGACGVNTMASSAVVN.

Positions 1–19 are cleaved as a signal peptide; sequence MAPLLQLLWLLTLLSTVAL. A propeptide spans 20-248 (activation peptide); that stretch reads SPVPAKPWAD…MSPAKSINDL (229 aa). N-linked (GlcNAc...) asparagine glycosylation is found at N35, N138, and N173. Disulfide bonds link C270/C311 and C304/C344. Residue C273 is part of the active site. 2 N-linked (GlcNAc...) asparagine glycosylation sites follow: N345 and N356. A disulfide bond links C402 and C450. Residue H409 is part of the active site. The N-linked (GlcNAc...) asparagine glycan is linked to N418. Residue N429 is part of the active site.

It belongs to the peptidase C1 family.

Its subcellular location is the lysosome. It catalyses the reaction The recombinant enzyme cleaves synthetic substrates with Phe and Leu (better than Val) in P2, with high specificity constant (kcat/Km) comparable to that of cathepsin L.. Its function is as follows. Thiol protease which is believed to participate in intracellular degradation and turnover of proteins. Has also been implicated in tumor invasion and metastasis. This Mus musculus (Mouse) protein is Cathepsin F (Ctsf).